The sequence spans 589 residues: Transmembrane 9 superfamily member 3 (589 aa).

An N-terminal signal peptide occupies residues 1 to 28 (MRPLPGALGVAAAAALWLLLLLLPRTRA). N-linked (GlcNAc...) asparagine glycosylation occurs at N174. 5 consecutive transmembrane segments (helical) span residues 224-244 (FSIFNSFMMVIFLVGLVSMIL), 294-314 (LIGSGCQIFAVSLIVIIVAMI), 328-348 (AIFVYAATSPVNGYFGGSLYA), 360-380 (FIGAFLIPAMVCGTAFFINFI), and 389-409 (AIPFGTMVAVCCICFFVILPL). An N-linked (GlcNAc...) asparagine glycan is attached at N419. 4 helical membrane-spanning segments follow: residues 449 to 469 (IVCLGGILPFGSIFIEMYFIF), 482 to 502 (GFMMLVLVILCIVTVCVTIVC), 519 to 539 (FLSAASTAIYVYMYSFYYYFF), and 551 to 571 (FYFGYMAVFSTALGIMCGAIG).

The protein belongs to the nonaspanin (TM9SF) (TC 9.A.2) family.

The protein localises to the membrane. The chain is Transmembrane 9 superfamily member 3 (TM9SF3) from Homo sapiens (Human).